The following is a 302-amino-acid chain: Coiled-coil domain-containing protein 2 (302 aa).

Positions 1 to 22 (MKNFGLLVVCLSLATLVIPSDG) are cleaved as a signal peptide. Residues 198–234 (FADAMEKKAEALENAAEAAAEYISDQSEEVDDLSEEV) are a coiled coil. The interval 221–257 (SDQSEEVDDLSEEVLDDDSDENDSTSSESEVEDSDVD) is disordered. The segment covering 223 to 257 (QSEEVDDLSEEVLDDDSDENDSTSSESEVEDSDVD) has biased composition (acidic residues). Asparagine 242 is a glycosylation site (N-linked (GlcNAc...) asparagine).

In terms of tissue distribution, component of the acid-insoluble organic matrix of calcified layers of the shell (at protein level).

The protein resides in the secreted. The chain is Coiled-coil domain-containing protein 2 from Lottia gigantea (Giant owl limpet).